A 459-amino-acid chain; its full sequence is Trigger factor (459 aa).

Positions 166 to 245 (GDFANIDLTA…VNSVKAEELP (80 aa)) constitute a PPIase FKBP-type domain.

The protein belongs to the FKBP-type PPIase family. Tig subfamily.

It is found in the cytoplasm. The catalysed reaction is [protein]-peptidylproline (omega=180) = [protein]-peptidylproline (omega=0). In terms of biological role, involved in protein export. Acts as a chaperone by maintaining the newly synthesized protein in an open conformation. Functions as a peptidyl-prolyl cis-trans isomerase. The sequence is that of Trigger factor from Bifidobacterium longum (strain NCC 2705).